Reading from the N-terminus, the 155-residue chain is Endoribonuclease YbeY (155 aa).

Positions 114, 118, and 124 each coordinate Zn(2+).

It belongs to the endoribonuclease YbeY family. Zn(2+) is required as a cofactor.

It localises to the cytoplasm. Its function is as follows. Single strand-specific metallo-endoribonuclease involved in late-stage 70S ribosome quality control and in maturation of the 3' terminus of the 16S rRNA. The sequence is that of Endoribonuclease YbeY from Tolumonas auensis (strain DSM 9187 / NBRC 110442 / TA 4).